The following is a 551-amino-acid chain: Putative transport protein HI_0035 (551 aa).

5 consecutive transmembrane segments (helical) span residues 4–24 (IAIT…IGHW), 28–48 (GVGL…HFTN), 65–85 (FGLI…FFSS), 95–115 (AFAI…HKIA), and 157–177 (VSYA…MWLI). RCK C-terminal domains are found at residues 191–275 (RFNA…IIGH) and 277–360 (VDAP…VIGN). The next 6 membrane-spanning stretches (helical) occupy residues 370-390 (MLPV…PFYI), 402-424 (AGGP…LYWF), 438-458 (IVLF…DTLV), 463-483 (LEWM…VGTI), 492-512 (YLTI…LAFA), and 529-549 (VYPL…VLLW).

The protein belongs to the AAE transporter (TC 2.A.81) family. YidE subfamily.

The protein localises to the cell membrane. The protein is Putative transport protein HI_0035 of Haemophilus influenzae (strain ATCC 51907 / DSM 11121 / KW20 / Rd).